Consider the following 37-residue polypeptide: Large ribosomal subunit protein bL36 (37 aa).

Belongs to the bacterial ribosomal protein bL36 family.

This Campylobacter jejuni subsp. jejuni serotype O:6 (strain 81116 / NCTC 11828) protein is Large ribosomal subunit protein bL36.